Reading from the N-terminus, the 154-residue chain is Transcriptional repressor NrdR (154 aa).

A zinc finger spans residues 3-34 (CPFCGAHDTKVIDSRLVAEGDQVRRRRECLAC). Positions 49 to 139 (PRLIKQDGSR…VYRRFQDLNE (91 aa)) constitute an ATP-cone domain.

It belongs to the NrdR family. Requires Zn(2+) as cofactor.

In terms of biological role, negatively regulates transcription of bacterial ribonucleotide reductase nrd genes and operons by binding to NrdR-boxes. This chain is Transcriptional repressor NrdR, found in Pseudomonas aeruginosa (strain LESB58).